A 349-amino-acid polypeptide reads, in one-letter code: Anthranilate phosphoribosyltransferase (349 aa).

5-phospho-alpha-D-ribose 1-diphosphate contacts are provided by residues glycine 82, 85–86, 92–95, 110–118, and serine 122; these read GD, NVST, and KHGNRAVSG. Residue glycine 82 participates in anthranilate binding. Serine 94 provides a ligand contact to Mg(2+). Asparagine 113 provides a ligand contact to anthranilate. An anthranilate-binding site is contributed by arginine 168. Residues aspartate 227 and glutamate 228 each coordinate Mg(2+).

Belongs to the anthranilate phosphoribosyltransferase family. Homodimer. The cofactor is Mg(2+).

The catalysed reaction is N-(5-phospho-beta-D-ribosyl)anthranilate + diphosphate = 5-phospho-alpha-D-ribose 1-diphosphate + anthranilate. The protein operates within amino-acid biosynthesis; L-tryptophan biosynthesis; L-tryptophan from chorismate: step 2/5. Catalyzes the transfer of the phosphoribosyl group of 5-phosphorylribose-1-pyrophosphate (PRPP) to anthranilate to yield N-(5'-phosphoribosyl)-anthranilate (PRA). The sequence is that of Anthranilate phosphoribosyltransferase from Pseudomonas putida (Arthrobacter siderocapsulatus).